The following is a 356-amino-acid chain: Neutral protease 2 homolog UREG_03761 (356 aa).

Positions 1–19 (MRFSSSFLSVLALASQALA) are cleaved as a signal peptide. Residues 20-181 (FPLNDLPTTD…ALPEATLDKR (162 aa)) constitute a propeptide that is removed on maturation. 2 disulfide bridges follow: cysteine 189-cysteine 259 and cysteine 266-cysteine 284. Zn(2+) is bound at residue histidine 308. Glutamate 309 is a catalytic residue. Histidine 312 and aspartate 323 together coordinate Zn(2+).

Belongs to the peptidase M35 family. Zn(2+) is required as a cofactor.

It localises to the secreted. The catalysed reaction is Preferential cleavage of bonds with hydrophobic residues in P1'. Also 3-Asn-|-Gln-4 and 8-Gly-|-Ser-9 bonds in insulin B chain.. In terms of biological role, secreted metalloproteinase that allows assimilation of proteinaceous substrates. Shows high activities on basic nuclear substrates such as histone and protamine. This is Neutral protease 2 homolog UREG_03761 from Uncinocarpus reesii (strain UAMH 1704).